We begin with the raw amino-acid sequence, 741 residues long: Phosphoribosylformylglycinamidine synthase subunit PurL (741 aa).

Histidine 53 is an active-site residue. The ATP site is built by tyrosine 56 and lysine 95. Position 97 (glutamate 97) interacts with Mg(2+). Substrate contacts are provided by residues 98-101 and arginine 120; that span reads SHNH. Histidine 99 acts as the Proton acceptor in catalysis. A Mg(2+)-binding site is contributed by aspartate 121. Glutamine 244 contacts substrate. Residue aspartate 274 participates in Mg(2+) binding. 318–320 contacts substrate; sequence ESQ. ATP is bound by residues aspartate 501 and glycine 538. Asparagine 539 lines the Mg(2+) pocket. Residue serine 541 participates in substrate binding.

It belongs to the FGAMS family. In terms of assembly, monomer. Part of the FGAM synthase complex composed of 1 PurL, 1 PurQ and 2 PurS subunits.

The protein localises to the cytoplasm. It catalyses the reaction N(2)-formyl-N(1)-(5-phospho-beta-D-ribosyl)glycinamide + L-glutamine + ATP + H2O = 2-formamido-N(1)-(5-O-phospho-beta-D-ribosyl)acetamidine + L-glutamate + ADP + phosphate + H(+). Its pathway is purine metabolism; IMP biosynthesis via de novo pathway; 5-amino-1-(5-phospho-D-ribosyl)imidazole from N(2)-formyl-N(1)-(5-phospho-D-ribosyl)glycinamide: step 1/2. Functionally, part of the phosphoribosylformylglycinamidine synthase complex involved in the purines biosynthetic pathway. Catalyzes the ATP-dependent conversion of formylglycinamide ribonucleotide (FGAR) and glutamine to yield formylglycinamidine ribonucleotide (FGAM) and glutamate. The FGAM synthase complex is composed of three subunits. PurQ produces an ammonia molecule by converting glutamine to glutamate. PurL transfers the ammonia molecule to FGAR to form FGAM in an ATP-dependent manner. PurS interacts with PurQ and PurL and is thought to assist in the transfer of the ammonia molecule from PurQ to PurL. The polypeptide is Phosphoribosylformylglycinamidine synthase subunit PurL (Ligilactobacillus salivarius (strain UCC118) (Lactobacillus salivarius)).